A 528-amino-acid polypeptide reads, in one-letter code: Probable serine/threonine-protein kinase DDB_G0282417 (528 aa).

Over residues 49–77 (NNNNNNNNNNNNNNNNNNNNNNNNNNKNN) the composition is skewed to low complexity. The disordered stretch occupies residues 49 to 84 (NNNNNNNNNNNNNNNNNNNNNNNNNNKNNNDGDDAA). The region spanning 136 to 466 (QQNRVLIGEG…ESLINNHQYS (331 aa)) is the Protein kinase domain. Residues 142 to 150 (IGEGHYGKV) and Lys166 contribute to the ATP site. Residue Asp266 is the Proton acceptor of the active site.

This sequence belongs to the protein kinase superfamily. Ser/Thr protein kinase family.

It carries out the reaction L-seryl-[protein] + ATP = O-phospho-L-seryl-[protein] + ADP + H(+). The enzyme catalyses L-threonyl-[protein] + ATP = O-phospho-L-threonyl-[protein] + ADP + H(+). The polypeptide is Probable serine/threonine-protein kinase DDB_G0282417 (Dictyostelium discoideum (Social amoeba)).